The primary structure comprises 100 residues: Sodium-influx-stimulating peptide (100 aa).

A signal peptide spans 1–23; the sequence is MLSSVALRYLLVLSLAFLAVVTS.

Post-translationally, three disulfide bonds are present. As to expression, expressed by the yellow cells, peptidergic (neuroendocrine) neurons of the central nervous system.

In terms of biological role, stimulates integumental Na(+) uptake. Controls the activity of sodium pumps in the integument, pericardium, ureter and nephridial gland. The polypeptide is Sodium-influx-stimulating peptide (SIS) (Lymnaea stagnalis (Great pond snail)).